The sequence spans 288 residues: L-threonine kinase (288 aa).

80–90 (PIAKGMASSTA) serves as a coordination point for ATP.

Belongs to the GHMP kinase family. PduX subfamily.

Its subcellular location is the cytoplasm. It carries out the reaction L-threonine + ATP = O-phospho-L-threonine + ADP + H(+). It participates in cofactor biosynthesis; adenosylcobalamin biosynthesis. The protein operates within polyol metabolism; 1,2-propanediol degradation. Functionally, L-threonine kinase that catalyzes the conversion of L-threonine to L-threonine-O-3-phosphate. Involved in the de novo synthesis of adenosylcobalamin (coenzyme B12) and the assimilation of cobyric acid. Expression of a cosmid containing the full 21-gene pdu operon in E.coli allows E.coli to grow on 1,2-propanediol (1,2-PD) with the appearance of bacterial microcompartments (BMC) in its cytoplasm. Its function is as follows. The 1,2-PD-specific bacterial microcompartment (BMC) concentrates low levels of 1,2-PD catabolic enzymes, concentrates volatile reaction intermediates thus enhancing pathway flux and keeps the level of toxic, mutagenic propionaldehyde low. This gene probably benefits from its induction via the Pdu promoter, rather than a physical interaction with the BMC. The sequence is that of L-threonine kinase from Citrobacter freundii.